The following is a 972-amino-acid chain: MRYDVQELLLHQSAEDPFARFANGMAYHPFLQLTQRPTDFSVSSLLTAGSNNNNSGNTNSGNNNSNSNNNTNSNTNNTNNLVAVSPTGGGAQLSPQSNHSSSNTTTTSNTNNSSSNNNNNNSTHNNNNNHTNNNNNNNNNTSQKQGHHLSTTEEPPSPAGTPPPTIVGLPPIPPPNNNSSSSSSNNSASAAAHPSHHPTAAHHSPSTGAAAPPAGPTGLPPPTPPHHLQQQQQQQQHPAPPPPPYFPAAALAALAGSPAGPHPGLYPGGGLRFPPHHPGAHPHAHHLGSAYTTAEDVVLASAVAHQLHPAMRPLRALQPEDDGVVDDPKVTLEGKDLWEKFHKLGTEMVITKSGRQMFPQMKFRVSGLDAKAKYILLLDIVAADDYRYKFHNSRWMVAGKADPEMPKRMYIHPDSPTTGEQWMQKVVSFHKLKLTNNISDKHGFVSTTILNSMHKYQPRFHLVRANDILKLPYSTFRTYVFKETEFIAVTAYQNEKITQLKIDNNPFAKGFRDTGAGKREKKQALMSNRGSDSDKLNPTHVSSSRAPLHLGHAGRPPHLHPHAALLDNQQDDDDKLLDVVGPPQSPLLPLSHSLQQMHAHQHSAALAAWFNHLAGAGAGASEHAAAAAANASAEDALRRRLQADADVERDGSDSSCSESVGGSTGGAFRPTSTGSPKEAVGAAAAAAAAGLNPGGGSYPSPNISVGPPIHPSPHLLPYLYPHGLYPPPHLGLLHNPAAAAAMSPAGLNPGLLFNAQLALAAQHPALFGHAYAAAGHTPVSPLQGLKSHRFSPYSLPGSLGSAFDAVTPGSNANRSGDPPGGGGGGLGGGVVENGPRSLSSSPRPRPASHSPPTRPISMSPTTPPSLMKQPRGGGAGAGVAQSQHSPSELKSMEKMVNGLEVQHNGSAAAAAAALQLAEEAAQHHHHTQAHHQQQQHQSHHQQQHHQQPAQPHPHHQTHLHSHHGATTGGTDQ.

6 disordered regions span residues 44–248 (SLLT…YFPA), 263–286 (PGLY…HAHH), 508–563 (AKGF…HPHA), 645–676 (ADVE…TGSP), 805–889 (AVTP…PSEL), and 918–972 (EEAA…GTDQ). Composition is skewed to low complexity over residues 49–80 (GSNN…NTNN) and 97–142 (SNHS…NNTS). Residues 155 to 176 (PPSPAGTPPPTIVGLPPIPPPN) are compositionally biased toward pro residues. Composition is skewed to low complexity over residues 177-193 (NNSS…AAAH) and 201-212 (AHHSPSTGAAAP). Residues 213 to 225 (PAGPTGLPPPTPP) show a composition bias toward pro residues. The span at 226–237 (HHLQQQQQQQQH) shows a compositional bias: low complexity. The span at 274-286 (PPHHPGAHPHAHH) shows a compositional bias: basic residues. The segment at residues 332–513 (LEGKDLWEKF…NNPFAKGFRD (182 aa)) is a DNA-binding region (T-box). The span at 818-831 (PPGGGGGGLGGGVV) shows a compositional bias: gly residues. Residues 835–851 (PRSLSSSPRPRPASHSP) are compositionally biased toward low complexity. S887 carries the phosphoserine modification. The segment covering 952-963 (HPHHQTHLHSHH) has biased composition (basic residues).

In terms of tissue distribution, in third-instar larvae, expressed in the brain region that will develop into optic lobes and more weakly in the thoracic part of the ventral ganglion.

It localises to the nucleus. In terms of biological role, essential protein that may function as a transcription regulator. Vital for pupal development. Required for proper development of the optic lobes and wings, and abdominal pigmentation. The sequence is that of Optomotor-blind protein (bi) from Drosophila melanogaster (Fruit fly).